Consider the following 376-residue polypeptide: UPF0284 protein glr4139 (376 aa).

The protein belongs to the UPF0284 family.

The sequence is that of UPF0284 protein glr4139 from Gloeobacter violaceus (strain ATCC 29082 / PCC 7421).